A 322-amino-acid chain; its full sequence is Transcription cofactor vestigial-like protein 2 (322 aa).

Over residues 42–61 the composition is skewed to low complexity; the sequence is ASPGSSASGSSSFSNPTPAS. Disordered stretches follow at residues 42–75 and 248–322; these read ASPG…ERPP and PGRL…PTLG. A compositionally biased stretch (basic and acidic residues) spans 62–75; it reads VKEEEGSPEKERPP. Low complexity-rich tracts occupy residues 248-258 and 270-283; these read PGRLAPASAPA and GEPA…PGGP. Over residues 312–322 the composition is skewed to pro residues; that stretch reads SAPPALYPTLG.

It belongs to the vestigial family. Interacts with TEFs. Binds to TEAD1/TEF1. In terms of tissue distribution, skeletal muscle specific.

The protein localises to the nucleus. Its function is as follows. May act as a specific coactivator for the mammalian TEFs. May play a role in the development of skeletal muscles. The protein is Transcription cofactor vestigial-like protein 2 (Vgll2) of Mus musculus (Mouse).